The primary structure comprises 112 residues: UPF0122 protein CPR_1686 (112 aa).

It belongs to the UPF0122 family.

In terms of biological role, might take part in the signal recognition particle (SRP) pathway. This is inferred from the conservation of its genetic proximity to ftsY/ffh. May be a regulatory protein. This is UPF0122 protein CPR_1686 from Clostridium perfringens (strain SM101 / Type A).